The sequence spans 267 residues: NAD kinase (267 aa).

D45 (proton acceptor) is an active-site residue. NAD(+) is bound by residues 45–46 (DG), 121–122 (NE), K147, D149, 160–165 (TAYSKS), and A184.

It belongs to the NAD kinase family. A divalent metal cation is required as a cofactor.

It is found in the cytoplasm. It carries out the reaction NAD(+) + ATP = ADP + NADP(+) + H(+). Functionally, involved in the regulation of the intracellular balance of NAD and NADP, and is a key enzyme in the biosynthesis of NADP. Catalyzes specifically the phosphorylation on 2'-hydroxyl of the adenosine moiety of NAD to yield NADP. The sequence is that of NAD kinase from Lactobacillus gasseri (strain ATCC 33323 / DSM 20243 / BCRC 14619 / CIP 102991 / JCM 1131 / KCTC 3163 / NCIMB 11718 / NCTC 13722 / AM63).